A 64-amino-acid chain; its full sequence is Large ribosomal subunit protein bL35 (64 aa).

It belongs to the bacterial ribosomal protein bL35 family.

The sequence is that of Large ribosomal subunit protein bL35 from Chlorobium chlorochromatii (strain CaD3).